Here is a 113-residue protein sequence, read N- to C-terminus: Iron-sulfur cluster insertion protein ErpA (113 aa).

3 residues coordinate iron-sulfur cluster: C41, C105, and C107.

This sequence belongs to the HesB/IscA family. As to quaternary structure, homodimer. It depends on iron-sulfur cluster as a cofactor.

In terms of biological role, required for insertion of 4Fe-4S clusters for at least IspG. This Actinobacillus succinogenes (strain ATCC 55618 / DSM 22257 / CCUG 43843 / 130Z) protein is Iron-sulfur cluster insertion protein ErpA.